The sequence spans 282 residues: 2-dehydro-3-deoxyphosphooctonate aldolase (282 aa).

Belongs to the KdsA family.

It is found in the cytoplasm. The catalysed reaction is D-arabinose 5-phosphate + phosphoenolpyruvate + H2O = 3-deoxy-alpha-D-manno-2-octulosonate-8-phosphate + phosphate. Its pathway is carbohydrate biosynthesis; 3-deoxy-D-manno-octulosonate biosynthesis; 3-deoxy-D-manno-octulosonate from D-ribulose 5-phosphate: step 2/3. It participates in bacterial outer membrane biogenesis; lipopolysaccharide biosynthesis. The chain is 2-dehydro-3-deoxyphosphooctonate aldolase from Chromobacterium violaceum (strain ATCC 12472 / DSM 30191 / JCM 1249 / CCUG 213 / NBRC 12614 / NCIMB 9131 / NCTC 9757 / MK).